The chain runs to 486 residues: Mitogen-activated protein kinase 17 (486 aa).

The Protein kinase domain occupies 16-307 (YQIQEVVGKG…AEEALADPYF (292 aa)). ATP-binding positions include 22–30 (VGKGSYGVV) and Lys45. Asp142 functions as the Proton acceptor in the catalytic mechanism. Thr178 carries the post-translational modification Phosphothreonine. Residues 178–180 (TDY) carry the TXY motif. A Phosphotyrosine modification is found at Tyr180. A Phosphothreonine modification is found at Thr183. The disordered stretch occupies residues 386–455 (EEHNDDEEEH…LSSQKASQVD (70 aa)). A compositionally biased stretch (low complexity) spans 422–433 (SVHAQSSSASVV). Residues 440-452 (PNTATGLSSQKAS) are compositionally biased toward polar residues.

It belongs to the protein kinase superfamily. CMGC Ser/Thr protein kinase family. MAP kinase subfamily. Dually phosphorylated on Thr-178 and Tyr-180, which activates the enzyme.

The catalysed reaction is L-seryl-[protein] + ATP = O-phospho-L-seryl-[protein] + ADP + H(+). The enzyme catalyses L-threonyl-[protein] + ATP = O-phospho-L-threonyl-[protein] + ADP + H(+). With respect to regulation, activated by threonine and tyrosine phosphorylation. The protein is Mitogen-activated protein kinase 17 (MPK17) of Arabidopsis thaliana (Mouse-ear cress).